A 348-amino-acid polypeptide reads, in one-letter code: S-adenosylmethionine:tRNA ribosyltransferase-isomerase (348 aa).

The protein belongs to the QueA family. As to quaternary structure, monomer.

Its subcellular location is the cytoplasm. It catalyses the reaction 7-aminomethyl-7-carbaguanosine(34) in tRNA + S-adenosyl-L-methionine = epoxyqueuosine(34) in tRNA + adenine + L-methionine + 2 H(+). The protein operates within tRNA modification; tRNA-queuosine biosynthesis. Transfers and isomerizes the ribose moiety from AdoMet to the 7-aminomethyl group of 7-deazaguanine (preQ1-tRNA) to give epoxyqueuosine (oQ-tRNA). This chain is S-adenosylmethionine:tRNA ribosyltransferase-isomerase, found in Alteromonas mediterranea (strain DSM 17117 / CIP 110805 / LMG 28347 / Deep ecotype).